The sequence spans 374 residues: Probable dual-specificity RNA methyltransferase RlmN 3 (374 aa).

Glu-96 acts as the Proton acceptor in catalysis. The region spanning 110-350 is the Radical SAM core domain; the sequence is DHSRKTICIS…VTLRREKGHD (241 aa). Cys-117 and Cys-355 are disulfide-bonded. [4Fe-4S] cluster-binding residues include Cys-124, Cys-128, and Cys-131. Residues 181–182, Ser-213, 236–238, and Asn-312 contribute to the S-adenosyl-L-methionine site; these read GE and SLH. Cys-355 acts as the S-methylcysteine intermediate in catalysis.

Belongs to the radical SAM superfamily. RlmN family. Requires [4Fe-4S] cluster as cofactor.

The protein resides in the cytoplasm. The catalysed reaction is adenosine(2503) in 23S rRNA + 2 reduced [2Fe-2S]-[ferredoxin] + 2 S-adenosyl-L-methionine = 2-methyladenosine(2503) in 23S rRNA + 5'-deoxyadenosine + L-methionine + 2 oxidized [2Fe-2S]-[ferredoxin] + S-adenosyl-L-homocysteine. The enzyme catalyses adenosine(37) in tRNA + 2 reduced [2Fe-2S]-[ferredoxin] + 2 S-adenosyl-L-methionine = 2-methyladenosine(37) in tRNA + 5'-deoxyadenosine + L-methionine + 2 oxidized [2Fe-2S]-[ferredoxin] + S-adenosyl-L-homocysteine. Its function is as follows. Specifically methylates position 2 of adenine 2503 in 23S rRNA and position 2 of adenine 37 in tRNAs. This is Probable dual-specificity RNA methyltransferase RlmN 3 from Opitutus terrae (strain DSM 11246 / JCM 15787 / PB90-1).